We begin with the raw amino-acid sequence, 220 residues long: Glycerol-3-phosphate acyltransferase (220 aa).

The next 6 membrane-spanning stretches (helical) occupy residues 11–31 (INVI…GYAL), 70–90 (LLVL…SKLF), 96–116 (LQWM…FLNF), 127–147 (GSVV…WFFV), 153–173 (ISSL…FFVP), and 192–212 (PMVL…FNLL).

It belongs to the PlsY family. Probably interacts with PlsX.

It is found in the cell inner membrane. It carries out the reaction an acyl phosphate + sn-glycerol 3-phosphate = a 1-acyl-sn-glycero-3-phosphate + phosphate. Its pathway is lipid metabolism; phospholipid metabolism. Its function is as follows. Catalyzes the transfer of an acyl group from acyl-phosphate (acyl-PO(4)) to glycerol-3-phosphate (G3P) to form lysophosphatidic acid (LPA). This enzyme utilizes acyl-phosphate as fatty acyl donor, but not acyl-CoA or acyl-ACP. This is Glycerol-3-phosphate acyltransferase from Helicobacter pylori (strain J99 / ATCC 700824) (Campylobacter pylori J99).